The following is a 372-amino-acid chain: Alanine dehydrogenase 1 (372 aa).

H94 is a catalytic residue. 170-200 contacts NAD(+); sequence TYVIFGGGVAATNAANVALGLNAKVIIIELN.

It belongs to the AlaDH/PNT family.

It catalyses the reaction L-alanine + NAD(+) + H2O = pyruvate + NH4(+) + NADH + H(+). Its pathway is amino-acid degradation; L-alanine degradation via dehydrogenase pathway; NH(3) and pyruvate from L-alanine: step 1/1. May play a role in cell wall synthesis as L-alanine is an important constituent of the peptidoglycan layer. The protein is Alanine dehydrogenase 1 (ald1) of Staphylococcus aureus (strain MRSA252).